A 153-amino-acid polypeptide reads, in one-letter code: Guanyl-specific ribonuclease N1 (153 aa).

Residues 1-20 form the signal peptide; that stretch reads MVQLLSAFVSLLSVVAVSGA. Positions 21–49 are excised as a propeptide; that stretch reads AIPAPAPEAVVDVAPETATIEPTGNFTAQ. 2 disulfides stabilise this stretch: Cys51/Cys59 and Cys55/Cys152. The active site involves His89. Glu107 (proton acceptor) is an active-site residue. His141 (proton donor) is an active-site residue.

The protein belongs to the ribonuclease N1/T1 family.

The catalysed reaction is [RNA] containing guanosine + H2O = an [RNA fragment]-3'-guanosine-3'-phosphate + a 5'-hydroxy-ribonucleotide-3'-[RNA fragment].. The chain is Guanyl-specific ribonuclease N1 (grn) from Neurospora crassa (strain ATCC 24698 / 74-OR23-1A / CBS 708.71 / DSM 1257 / FGSC 987).